The sequence spans 212 residues: Large ribosomal subunit protein uL3 (212 aa).

The interval 117–142 (TSKGKGFQGNIKRHNQSRGPMTHGSR) is disordered.

Belongs to the universal ribosomal protein uL3 family. As to quaternary structure, part of the 50S ribosomal subunit. Forms a cluster with proteins L14 and L19.

In terms of biological role, one of the primary rRNA binding proteins, it binds directly near the 3'-end of the 23S rRNA, where it nucleates assembly of the 50S subunit. The protein is Large ribosomal subunit protein uL3 of Acholeplasma laidlawii (strain PG-8A).